A 261-amino-acid chain; its full sequence is Hemin import ATP-binding protein HmuV (261 aa).

In terms of domain architecture, ABC transporter spans 7–243; the sequence is LRGQNLSLQF…EIIDAVYGYK (237 aa). 39–46 is an ATP binding site; sequence GPNGAGKS.

This sequence belongs to the ABC transporter superfamily. Heme (hemin) importer (TC 3.A.1.14.5) family. The complex is composed of two ATP-binding proteins (HmuV), two transmembrane proteins (HmuU) and a solute-binding protein (HmuT).

The protein localises to the cell inner membrane. Its function is as follows. Part of the ABC transporter complex HmuTUV involved in hemin import. Responsible for energy coupling to the transport system. In Vibrio vulnificus (strain YJ016), this protein is Hemin import ATP-binding protein HmuV.